The chain runs to 356 residues: Protein trichome birefringence-like 41 (356 aa).

Residues 12–31 (SALVLSLLLLLLLPLLHEAA) form a helical; Signal-anchor for type II membrane protein membrane-spanning segment. Positions 107 to 109 (GDS) match the GDS motif motif. The DCXHWCLPGXXDXWN motif motif lies at 333-347 (DCSHWCLSGVPDTWN).

It belongs to the PC-esterase family. TBL subfamily.

The protein localises to the membrane. Its function is as follows. May act as a bridging protein that binds pectin and other cell wall polysaccharides. Probably involved in maintaining esterification of pectins. May be involved in the specific O-acetylation of cell wall polymers. The sequence is that of Protein trichome birefringence-like 41 (TBL41) from Arabidopsis thaliana (Mouse-ear cress).